Consider the following 802-residue polypeptide: Lon protease (802 aa).

Residues 17 to 211 form the Lon N-terminal domain; it reads SIVMPLFEVV…LFLHILTKHK (195 aa). 363 to 370 is an ATP binding site; the sequence is GPPGTGKT. Positions 600–780 constitute a Lon proteolytic domain; sequence ENVPGVVTGL…EEVLREALDI (181 aa). Residues Ser-686 and Lys-729 contribute to the active site.

Belongs to the peptidase S16 family. Homohexamer. Organized in a ring with a central cavity.

The protein resides in the cytoplasm. The catalysed reaction is Hydrolysis of proteins in presence of ATP.. In terms of biological role, ATP-dependent serine protease that mediates the selective degradation of mutant and abnormal proteins as well as certain short-lived regulatory proteins. Required for cellular homeostasis and for survival from DNA damage and developmental changes induced by stress. Degrades polypeptides processively to yield small peptide fragments that are 5 to 10 amino acids long. Binds to DNA in a double-stranded, site-specific manner. The protein is Lon protease of Methanosarcina barkeri (strain Fusaro / DSM 804).